A 286-amino-acid polypeptide reads, in one-letter code: MKQRLFILSQYLLPHHLLSRLIGCVAECRIGWLKNRLIAWFAKQYRVDMSEAQVEDLSAYEHFNAFFTRALKAGARPLDETPGAILCPADGAISQLGVIEHGRLFQAKGHSFSATELLGGDAERAAPFMGGQFATVYLSPKDYHRVHMPLAGTLKEMVYVPGRLFSVNQTTAENVPELFARNERVVCLFDTERGPMAVVLVGAMIVASVETVWAGLVTPPKRELKSTRYDAESRGPIELAKGAELGRFKLGSTAIVLFGPQQVQWAEELTAGSTVRMGQLLGNAQL.

Active-site charge relay system; for autoendoproteolytic cleavage activity residues include aspartate 90, histidine 147, and serine 252. Serine 252 serves as the catalytic Schiff-base intermediate with substrate; via pyruvic acid; for decarboxylase activity. At serine 252 the chain carries Pyruvic acid (Ser); by autocatalysis.

It belongs to the phosphatidylserine decarboxylase family. PSD-B subfamily. Prokaryotic type I sub-subfamily. Heterodimer of a large membrane-associated beta subunit and a small pyruvoyl-containing alpha subunit. It depends on pyruvate as a cofactor. Post-translationally, is synthesized initially as an inactive proenzyme. Formation of the active enzyme involves a self-maturation process in which the active site pyruvoyl group is generated from an internal serine residue via an autocatalytic post-translational modification. Two non-identical subunits are generated from the proenzyme in this reaction, and the pyruvate is formed at the N-terminus of the alpha chain, which is derived from the carboxyl end of the proenzyme. The autoendoproteolytic cleavage occurs by a canonical serine protease mechanism, in which the side chain hydroxyl group of the serine supplies its oxygen atom to form the C-terminus of the beta chain, while the remainder of the serine residue undergoes an oxidative deamination to produce ammonia and the pyruvoyl prosthetic group on the alpha chain. During this reaction, the Ser that is part of the protease active site of the proenzyme becomes the pyruvoyl prosthetic group, which constitutes an essential element of the active site of the mature decarboxylase.

It localises to the cell membrane. It carries out the reaction a 1,2-diacyl-sn-glycero-3-phospho-L-serine + H(+) = a 1,2-diacyl-sn-glycero-3-phosphoethanolamine + CO2. Its pathway is phospholipid metabolism; phosphatidylethanolamine biosynthesis; phosphatidylethanolamine from CDP-diacylglycerol: step 2/2. Its function is as follows. Catalyzes the formation of phosphatidylethanolamine (PtdEtn) from phosphatidylserine (PtdSer). The chain is Phosphatidylserine decarboxylase proenzyme from Ectopseudomonas mendocina (strain ymp) (Pseudomonas mendocina).